Reading from the N-terminus, the 35-residue chain is Cytochrome b6-f complex subunit 5 (35 aa).

A helical membrane pass occupies residues 5–25; sequence LLTGIVLGSIFITLLGLLAAA.

It belongs to the PetG family. The 4 large subunits of the cytochrome b6-f complex are cytochrome b6, subunit IV (17 kDa polypeptide, PetD), cytochrome f and the Rieske protein, while the 4 small subunits are PetG, PetL, PetM and PetN. The complex functions as a dimer.

Its subcellular location is the plastid. The protein localises to the chloroplast thylakoid membrane. Functionally, component of the cytochrome b6-f complex, which mediates electron transfer between photosystem II (PSII) and photosystem I (PSI), cyclic electron flow around PSI, and state transitions. PetG is required for either the stability or assembly of the cytochrome b6-f complex. In Cyanidium caldarium (Red alga), this protein is Cytochrome b6-f complex subunit 5.